The sequence spans 270 residues: Probable 6-oxopurine nucleoside phosphorylase (270 aa).

Phosphate contacts are provided by residues serine 10 and 48–49; that span reads RH. Substrate is bound at residue methionine 191. Residue threonine 192 coordinates phosphate. 215 to 217 provides a ligand contact to substrate; that stretch reads NYA.

The protein belongs to the PNP/MTAP phosphorylase family. MTAP subfamily. Homohexamer. Dimer of a homotrimer.

It catalyses the reaction a purine D-ribonucleoside + phosphate = a purine nucleobase + alpha-D-ribose 1-phosphate. It functions in the pathway purine metabolism; purine nucleoside salvage. Purine nucleoside phosphorylase which is highly specific for 6-oxopurine nucleosides. Cleaves guanosine or inosine to respective bases and sugar-1-phosphate molecules. Involved in purine salvage. This is Probable 6-oxopurine nucleoside phosphorylase from Korarchaeum cryptofilum (strain OPF8).